Reading from the N-terminus, the 848-residue chain is ATP-dependent Clp protease ATP-binding subunit ClpC1 (848 aa).

Positions Phe-2 to Gly-144 constitute a Clp R domain. Repeat stretches follow at residues Phe-5–Gly-70 and Phe-80–Gly-144. In terms of domain architecture, UVR spans Asp-425–Gln-460. Residues Gly-553 to Thr-560 and Lys-617 to Glu-626 contribute to the ATP site. The disordered stretch occupies residues Gly-811–Glu-848. The segment covering Ala-835–Glu-848 has biased composition (low complexity).

Belongs to the ClpA/ClpB family. ClpC subfamily.

Its function is as follows. ATP-dependent specificity component of the Clp protease. It directs the protease to specific substrates. Can perform chaperone functions in the absence of ClpP. Degrades anti-sigma-E factor RseA in the presence of ClpP2. The protein is ATP-dependent Clp protease ATP-binding subunit ClpC1 (clpC1) of Mycolicibacterium smegmatis (strain ATCC 700084 / mc(2)155) (Mycobacterium smegmatis).